A 395-amino-acid polypeptide reads, in one-letter code: 8-amino-7-oxononanoate synthase (395 aa).

Arg24 serves as a coordination point for substrate. Residue 111–112 coordinates pyridoxal 5'-phosphate; it reads GF. Residue His136 participates in substrate binding. Pyridoxal 5'-phosphate-binding positions include Ser184, 209-212, and 240-243; these read DDAH and TLSK. Residue Lys243 is modified to N6-(pyridoxal phosphate)lysine. Position 357 (Thr357) interacts with substrate.

Belongs to the class-II pyridoxal-phosphate-dependent aminotransferase family. BioF subfamily. As to quaternary structure, homodimer. Pyridoxal 5'-phosphate serves as cofactor.

The enzyme catalyses 6-carboxyhexanoyl-[ACP] + L-alanine + H(+) = (8S)-8-amino-7-oxononanoate + holo-[ACP] + CO2. It functions in the pathway cofactor biosynthesis; biotin biosynthesis. Its function is as follows. Catalyzes the decarboxylative condensation of pimeloyl-[acyl-carrier protein] and L-alanine to produce 8-amino-7-oxononanoate (AON), [acyl-carrier protein], and carbon dioxide. This chain is 8-amino-7-oxononanoate synthase, found in Thermoanaerobacter pseudethanolicus (strain ATCC 33223 / 39E) (Clostridium thermohydrosulfuricum).